The primary structure comprises 1173 residues: Thrombospondin-1 (1173 aa).

Positions 1–18 are cleaved as a signal peptide; sequence MKGIFLLLMLVMPQTHQA. Residues 22 to 224 form the Laminin G-like domain; the sequence is GNDDNSVFDL…LQNVRFVFGT (203 aa). The heparin-binding stretch occupies residues 50–98; the sequence is HLVKGPDPSSPAYRIEDADLIPPLPEDKFQDLLDAIRADRGFILLATLR. N-linked (GlcNAc...) asparagine glycans are attached at residues N155 and N158. A disulfide bridge connects residues C174 and C235. N-linked (GlcNAc...) asparagine glycosylation is found at N250 and N363. In terms of domain architecture, VWFC spans 319-376; it reads GVCLHNGVLHKNRDEWTVDSCTECTCQNSATICRKVSCPLMPCTNATIPDGECCPRCW. 3 TSP type-1 domains span residues 382 to 432, 438 to 493, and 495 to 550; these read DDDW…QDCD, DGGW…DPCP, and NGQW…QDCP. 18 disulfides stabilise this stretch: C394/C426, C398/C431, C409/C416, C450/C487, C454/C492, C465/C477, C507/C544, C511/C549, C522/C534, C554/C565, C559/C575, C578/C589, C595/C611, C602/C620, C623/C647, C653/C666, C660/C679, and C681/C692. The 41-residue stretch at 550-590 folds into the EGF-like 1 domain; that stretch reads PIDGCLSNPCFAGVKCTSFIDGSWKCGSCPPGYRGNGITCK. The region spanning 649–693 is the EGF-like 2 domain; it reads PRNPCADGTHDCHKNARCIYLGHYSDPMFRCECRPGYAGNGIICG. TSP type-3 repeat units lie at residues 694-729, 730-765, 766-788, 789-824, 825-847, 848-885, 886-921, and 922-957; these read EDTDLDGWPNENLTCVDNATYHCLKDNCPNLPNSGQ, EDYDKDGMGDACDKDDDNDGILDDRDNCQFVYNPAQ, YDYDRDDVGDRCDNCPYNHNPDQ, ADTDRNGEGDACSVDIDGDGILNERDNCAYVYNVDQ, KDTDKDGVGDQCDNCPLEHNPEQ, TDSDSDLIGDKCDNNQDIDEDGHQNNLDNCPYIPNANQ, ADHDKDGKGDACDHDDDNDGVPDDKDNCRLVPNPDQ, and TDTNGDGRGDACQYDFDDDSIPDAEDVCPENVEIST. N-linked (GlcNAc...) asparagine glycosylation is found at N705 and N711. 9 disulfides stabilise this stretch: C708/C716, C721/C741, C757/C777, C780/C800, C816/C836, C839/C859, C877/C897, C913/C933, and C949/C1170. The interval 838–935 is disordered; that stretch reads NCPLEHNPEQ…GDGRGDACQY (98 aa). Residues 886 to 897 are compositionally biased toward basic and acidic residues; the sequence is ADHDKDGKGDAC. The Cell attachment site motif lies at 929-931; it reads RGD. Residues 961–1173 form the TSP C-terminal domain; that stretch reads RKFQMVPLDP…SDLKYECRDS (213 aa). An N-linked (GlcNAc...) asparagine glycan is attached at N1070.

The protein belongs to the thrombospondin family. Homotrimer; disulfide-linked.

The protein resides in the secreted. It is found in the cell surface. The protein localises to the extracellular space. Its subcellular location is the extracellular matrix. It localises to the endoplasmic reticulum. The protein resides in the sarcoplasmic reticulum. Adhesive glycoprotein that mediates cell-to-cell and cell-to-matrix interactions. Can bind to fibrinogen, fibronectin, laminin, type V collagen and integrins alpha-V/beta-1, alpha-V/beta-3 and alpha-IIb/beta-3. May play a role in ER stress response. The chain is Thrombospondin-1 (thbs1) from Xenopus laevis (African clawed frog).